The following is an 87-amino-acid chain: U18-myrmicitoxin-Mri1a (87 aa).

A signal peptide spans 1–32; the sequence is MKNNYNRINTFIVYLMVTFSLISIISITECTP. One can recognise an EGF-like domain in the interval 33 to 77; sequence NHDPCPPQYAEALCLNGGTCFSVTIMGSDNYNCICAPGFRGWRCQ. Intrachain disulfides connect cysteine 37–cysteine 52, cysteine 46–cysteine 65, and cysteine 67–cysteine 76.

In terms of processing, O-glycosylated. In terms of tissue distribution, expressed by the venom gland.

The protein localises to the secreted. This Manica rubida (European giant red ant) protein is U18-myrmicitoxin-Mri1a.